A 194-amino-acid polypeptide reads, in one-letter code: MQSQYPSAHAPTADEAMLWNREALPPGPGQEAVLRGITGEMADKGFVVANLDKLVNWARTGSLWPMTFGLACCAVEMIHAYMPRYDLDRFGVIPRASPRQSDVMIVAGTLTNKMAPALRRVYDQMPEPRWVISMGSCANGGGYYHYSYSVVRGCDRIVPVDVYVPGCPPTAEALVYGIMQLQKKIRRTGTILRG.

Residues Cys-72, Cys-73, Cys-137, and Cys-167 each coordinate [4Fe-4S] cluster.

It belongs to the complex I 20 kDa subunit family. In terms of assembly, NDH-1 is composed of 14 different subunits. Subunits NuoB, C, D, E, F, and G constitute the peripheral sector of the complex. It depends on [4Fe-4S] cluster as a cofactor.

Its subcellular location is the cell inner membrane. It catalyses the reaction a quinone + NADH + 5 H(+)(in) = a quinol + NAD(+) + 4 H(+)(out). Its function is as follows. NDH-1 shuttles electrons from NADH, via FMN and iron-sulfur (Fe-S) centers, to quinones in the respiratory chain. Couples the redox reaction to proton translocation (for every two electrons transferred, four hydrogen ions are translocated across the cytoplasmic membrane), and thus conserves the redox energy in a proton gradient. This Granulibacter bethesdensis (strain ATCC BAA-1260 / CGDNIH1) protein is NADH-quinone oxidoreductase subunit B.